The following is a 72-amino-acid chain: MTEKPNHEELGSKSIFYDPEWNPKGLAPPGFKNVAYNPATFTRKQSSLQRHMLGINADLPEEKKRMNKNGRE.

This sequence belongs to the AIM4 family.

The protein localises to the cytoplasm. This chain is Altered inheritance of mitochondria protein 4 (AIM4), found in Zygosaccharomyces rouxii (strain ATCC 2623 / CBS 732 / NBRC 1130 / NCYC 568 / NRRL Y-229).